The sequence spans 246 residues: Flagellar brake protein YcgR (246 aa).

A PilZ domain is found at 128 to 232 (KRAHFRAYVG…QAERQLLQAI (105 aa)).

The protein belongs to the YcgR family. Monomer. Interacts with the flagellar basal bodies.

The protein localises to the bacterial flagellum basal body. Functionally, acts as a flagellar brake, regulating swimming and swarming in a bis-(3'-5') cyclic diguanylic acid (c-di-GMP)-dependent manner. Binds 1 c-di-GMP dimer per subunit. Increasing levels of c-di-GMP lead to decreased motility. The sequence is that of Flagellar brake protein YcgR from Thioalkalivibrio sulfidiphilus (strain HL-EbGR7).